The sequence spans 261 residues: Dienlactone hydrolase 1 (261 aa).

Residues C147, D194, and H226 contribute to the active site.

The protein belongs to the dienelactone hydrolase family.

It participates in xenobiotic degradation. Dienlactone hydrolase; part of the Fusarium detoxification of benzoxazolinone cluster 1 (FDB1) involved in the degradation of benzoxazolinones produced by the host plant. Maize, wheat, and rye produce the 2 benzoxazinone phytoanticipins 2,4-dihy-droxy-7-methoxy-1,4-benzoxazin-3-one (DIMBOA) and 2,4-dihydroxy-1,4-benzoxazin-3-one (DIBOA) that, due to their inherent instability once released, spontaneously degrade to the more stable corresponding benzoxazolinones, 6-methoxy-2-benzoxazolinone (MBOA) and 2-benzoxazolinone (BOA), respectively. The first step in the detoxification of benzoxazolinones involves the hydrolysis of the cyclic ester bond of benzoxazolinones by the FDB1 cluster gamma-lactamase MBL1 to aminophenols. MBL1 is able to convert BOA into 2-aminophenol (2-AP), as well as MBOA into 5-methoxy-2-aminophenol (2-AMP). The FDB2 cluster N-malonyltransferase FDB2/NAT1 then metabolizes aminophenols via N-malonylation to non-toxic malonamic acids. FDB2/NAT1 converts 2-AP into N-(2-hydroxyphenyl) malonamic acid (HPMA) and 2-AMP into N-(2-hydroxy-4-methoxyphenyl) malonamic acid (HMPMA). The duplicated dienlactone hydrolases DLH1 and DLH2 may provide redundant function for hydrolyzing the lactone moiety in the BOA molecule. The roles of the amidases and other enzymes encoded by the 2 FDB clusters have not been identified so far. In Gibberella moniliformis (strain M3125 / FGSC 7600) (Maize ear and stalk rot fungus), this protein is Dienlactone hydrolase 1.